The chain runs to 148 residues: Large ribosomal subunit protein uL15 (148 aa).

The interval 1–51 (MNLSNLKPAEGSTKTRKRIGRGPGSGLGGTSTRGHKGAKSRSGYSKKIGFE) is disordered. Residues 21–31 (RGPGSGLGGTS) are compositionally biased toward gly residues.

This sequence belongs to the universal ribosomal protein uL15 family. Part of the 50S ribosomal subunit.

Its function is as follows. Binds to the 23S rRNA. In Phocaeicola vulgatus (strain ATCC 8482 / DSM 1447 / JCM 5826 / CCUG 4940 / NBRC 14291 / NCTC 11154) (Bacteroides vulgatus), this protein is Large ribosomal subunit protein uL15.